The chain runs to 321 residues: Ribonucleoside-diphosphate reductase small subunit (321 aa).

D78, E108, and H111 together coordinate Fe cation. Y115 is a catalytic residue. Residues 165–185 form a helical membrane-spanning segment; the sequence is ILMILIEGLFFASSFASIAYL. Fe cation-binding residues include E171, E205, and H208.

The protein belongs to the ribonucleoside diphosphate reductase small chain family. As to quaternary structure, heterotetramer composed of a homodimer of the large subunit (R1) and a homodimer of the small subunit (R2). Larger multisubunit protein complex are also active, composed of (R1)n(R2)n. Requires Fe cation as cofactor.

The protein resides in the host membrane. The enzyme catalyses a 2'-deoxyribonucleoside 5'-diphosphate + [thioredoxin]-disulfide + H2O = a ribonucleoside 5'-diphosphate + [thioredoxin]-dithiol. Functionally, ribonucleoside-diphosphate reductase holoenzyme provides the precursors necessary for viral DNA synthesis. Allows virus growth in non-dividing cells, as well as reactivation from latency in infected hosts. Catalyzes the biosynthesis of deoxyribonucleotides from the corresponding ribonucleotides. The polypeptide is Ribonucleoside-diphosphate reductase small subunit (Equus caballus (Horse)).